Here is a 765-residue protein sequence, read N- to C-terminus: Protein BCH2 (765 aa).

The segment at 1 to 31 is disordered; sequence MSFLWGSTKSKKGKNKKAAGSLPSGVVPQQR. Residues 735–765 are CHS5-binding; it reads LECLSKNRNEACLAYERPLPDLPSTIKPLAD.

It belongs to the CHAPS family. Component of the CHS5/6 complex composed of the 4 CHAPS proteins BCH1, BCH2, BUD7, and CHS6 as well as at least CHS5 and GTP-bound ARF1. The complex interacts with the cargo protein CHS3.

It localises to the golgi apparatus. The protein resides in the trans-Golgi network membrane. Member of the CHS5-ARF1P-binding proteins (CHAPS) which mediates export of specific cargo proteins, including chitin synthase CHS3. The polypeptide is Protein BCH2 (BCH2) (Saccharomyces cerevisiae (strain ATCC 204508 / S288c) (Baker's yeast)).